Here is a 246-residue protein sequence, read N- to C-terminus: Probable transcriptional regulatory protein APJL_1171 (246 aa).

It belongs to the TACO1 family.

Its subcellular location is the cytoplasm. The polypeptide is Probable transcriptional regulatory protein APJL_1171 (Actinobacillus pleuropneumoniae serotype 3 (strain JL03)).